A 235-amino-acid chain; its full sequence is Sugar fermentation stimulation protein homolog (235 aa).

This sequence belongs to the SfsA family.

This is Sugar fermentation stimulation protein homolog from Pseudomonas aeruginosa (strain ATCC 15692 / DSM 22644 / CIP 104116 / JCM 14847 / LMG 12228 / 1C / PRS 101 / PAO1).